The chain runs to 289 residues: MAWRDRRGALRAILEGSACVRPASVYDAISIRIADDLRFPLGMFGGSVASLAILGDPDSALITLTELAEQMRRMARAAALPVLVDADHGYGNALNVRRTVQELEAAGCAGLTIEDTLLPQAYGEAKPQLISSEEGLGKINAALDARLDPSLVIIGRTGACSISSLDDAIERAVAYEAAGVDALFFTGVKARDQLQAISAATRLPIVLGSPPAELADWEYLAAQRVRIAVQGHAPIAAATEAVFRTLSALRDGAAPQQLTGLATPELMDRVTRASLVDERGARFLGLARE.

Position 47 (Ser-47) interacts with substrate. Asp-85 is a Mg(2+) binding site. The substrate site is built by Arg-156 and His-232.

The protein belongs to the isocitrate lyase/PEP mutase superfamily. Oxaloacetate decarboxylase family. As to quaternary structure, homotetramer; dimer of dimers. It depends on Mg(2+) as a cofactor.

The enzyme catalyses oxaloacetate + H(+) = pyruvate + CO2. Its function is as follows. Catalyzes the decarboxylation of oxaloacetate into pyruvate. Seems to play a role in maintaining cellular concentrations of bicarbonate and pyruvate. In Rhodopseudomonas palustris (strain HaA2), this protein is Oxaloacetate decarboxylase.